Reading from the N-terminus, the 390-residue chain is Neuromedin-B receptor (390 aa).

Residues 1 to 44 (MPPKSLSNLSQTAGVNQSGFFPGASERDFLPATDRTTAEFVIRC) are Extracellular-facing. Asparagine 8 and asparagine 16 each carry an N-linked (GlcNAc...) asparagine glycan. The chain crosses the membrane as a helical span at residues 45–65 (VIPSLYLLIITVGLLGNIVLV). Topologically, residues 66 to 76 (KIFLTNSAMRS) are cytoplasmic. The chain crosses the membrane as a helical span at residues 77–97 (VPNIFISNLAAGDVLLLLTCV). The Extracellular segment spans residues 98-117 (PVDASRYFLDEWMFGKVGCK). Cysteine 116 and cysteine 198 are disulfide-bonded. The chain crosses the membrane as a helical span at residues 118-138 (LIPVIQLTSVGVSVFTLTALS). Over 139–155 (ADRYRAIVNPMDIQTSG) the chain is Cytoplasmic. A helical membrane pass occupies residues 156 to 176 (AVLWTCVKAGGIWVVSVLLAV). Topologically, residues 177–210 (PEAVFSEVARIDGLDNGSFTACIPYPQTDELHPK) are extracellular. The N-linked (GlcNAc...) asparagine glycan is linked to asparagine 192. Residues 211 to 231 (IHSVLIFLVYFLIPLGIISVY) traverse the membrane as a helical segment. Residues 232–266 (YYHIAKTLIKSAHNLPGEYNEHTKKQMETRKRLAK) are Cytoplasmic-facing. Residues 267–287 (IVLVFVGCFVFCWFPNHILYM) traverse the membrane as a helical segment. Residues 288–305 (YRSFNYNEIDPSLGHMIV) are Extracellular-facing. A helical transmembrane segment spans residues 306-328 (TLVARVLSFCNSCVNPFALYLLS). Over 329–390 (ESFRKHFNNQ…GHSVKQEMAL (62 aa)) the chain is Cytoplasmic. A lipid anchor (S-palmitoyl cysteine) is attached at cysteine 341. Serine 352 carries the phosphoserine modification.

The protein belongs to the G-protein coupled receptor 1 family. In terms of tissue distribution, highly expressed in peripheral tissues where it is detected in the respiratory system, circulatory system, digestive system, urogenital system, lymphatic organs and endocrine system (at protein level). In the testis, expressed mainly in Leydig cells (at protein level).

It localises to the cell membrane. Its function is as follows. Receptor for neuromedin-B. Contributes to the maintenance of basal sigh rate through signaling in the pre-Botzinger complex, a cluster of several thousand neurons in the ventrolateral medulla responsible for inspiration during respiratory activity. Contributes to the induction of sneezing following exposure to chemical irritants or allergens which causes release of NMB by nasal sensory neurons and activation of NMBR-expressing neurons in the sneeze-evoking region of the brainstem. These in turn activate neurons of the caudal ventral respiratory group, giving rise to the sneezing response. Contributes to induction of acute itch, possibly through its activation on dorsal root ganglion neurons by the NMB peptide. Plays a role in the innate immune response to influenza A virus infection by enhancing interferon alpha expression and reducing expression of IL6. Plays a role in CSF1-induced proliferation of osteoclast precursors by contributing to the positive regulation of the expression of the CSF1 receptor CSF1R. This is Neuromedin-B receptor (NMBR) from Sus scrofa (Pig).